We begin with the raw amino-acid sequence, 331 residues long: Probable tRNA pseudouridine synthase B (331 aa).

Asp-66 (nucleophile) is an active-site residue. The region spanning 233-307 is the PUA domain; the sequence is INKIIVKDSA…NEEDNREKYK (75 aa).

This sequence belongs to the pseudouridine synthase TruB family. Type 2 subfamily.

It catalyses the reaction uridine(55) in tRNA = pseudouridine(55) in tRNA. Its function is as follows. Could be responsible for synthesis of pseudouridine from uracil-55 in the psi GC loop of transfer RNAs. The protein is Probable tRNA pseudouridine synthase B of Methanococcus aeolicus (strain ATCC BAA-1280 / DSM 17508 / OCM 812 / Nankai-3).